We begin with the raw amino-acid sequence, 275 residues long: Trypsin-4 (275 aa).

Residues Met-1–Cys-18 form the signal peptide. The propeptide at Ala-19–Arg-48 is activation peptide. The Peptidase S1 domain maps to Ile-49–Gly-274. The cysteines at positions 74 and 90 are disulfide-linked. Residues His-89 and Asp-134 each act as charge relay system in the active site. 2 disulfides stabilise this stretch: Cys-199–Cys-215 and Cys-226–Cys-250. Ser-230 serves as the catalytic Charge relay system.

This sequence belongs to the peptidase S1 family. In terms of tissue distribution, expressed in the midgut. Expression levels drop a few hours after blood feeding and pick up again 28 hours later.

The protein localises to the secreted. The catalysed reaction is Preferential cleavage: Arg-|-Xaa, Lys-|-Xaa.. Its function is as follows. Constitutive trypsin that is expressed 2 days after emergence, coinciding with host seeking behavior of the female. In Anopheles gambiae (African malaria mosquito), this protein is Trypsin-4 (TRYP4).